Consider the following 370-residue polypeptide: Small ribosomal subunit biogenesis GTPase RsgA (370 aa).

One can recognise a CP-type G domain in the interval Arg-111 to Val-270. Residues Thr-158–Asp-161 and Gly-212–Thr-220 contribute to the GTP site. Cys-293, Cys-298, His-300, and Cys-306 together coordinate Zn(2+).

This sequence belongs to the TRAFAC class YlqF/YawG GTPase family. RsgA subfamily. In terms of assembly, monomer. Associates with 30S ribosomal subunit, binds 16S rRNA. Requires Zn(2+) as cofactor.

It is found in the cytoplasm. Functionally, one of several proteins that assist in the late maturation steps of the functional core of the 30S ribosomal subunit. Helps release RbfA from mature subunits. May play a role in the assembly of ribosomal proteins into the subunit. Circularly permuted GTPase that catalyzes slow GTP hydrolysis, GTPase activity is stimulated by the 30S ribosomal subunit. The chain is Small ribosomal subunit biogenesis GTPase RsgA from Streptomyces avermitilis (strain ATCC 31267 / DSM 46492 / JCM 5070 / NBRC 14893 / NCIMB 12804 / NRRL 8165 / MA-4680).